A 139-amino-acid polypeptide reads, in one-letter code: ATP synthase epsilon chain, chloroplastic (139 aa).

This sequence belongs to the ATPase epsilon chain family. In terms of assembly, F-type ATPases have 2 components, CF(1) - the catalytic core - and CF(0) - the membrane proton channel. CF(1) has five subunits: alpha(3), beta(3), gamma(1), delta(1), epsilon(1). CF(0) has three main subunits: a, b and c.

It localises to the plastid. The protein resides in the chloroplast thylakoid membrane. Its function is as follows. Produces ATP from ADP in the presence of a proton gradient across the membrane. The chain is ATP synthase epsilon chain, chloroplastic from Dictyota dichotoma.